A 276-amino-acid chain; its full sequence is Formamidopyrimidine-DNA glycosylase (276 aa).

Catalysis depends on Pro-2, which acts as the Schiff-base intermediate with DNA. The active-site Proton donor is Glu-3. The active-site Proton donor; for beta-elimination activity is the Lys-58. His-94, Arg-112, and Arg-157 together coordinate DNA. The FPG-type zinc-finger motif lies at 242–276 (FVYDRAGLPCRVCGTPIKQIVQGQRSTYFCPTCQR). Catalysis depends on Arg-266, which acts as the Proton donor; for delta-elimination activity.

The protein belongs to the FPG family. As to quaternary structure, monomer. Zn(2+) serves as cofactor.

It catalyses the reaction Hydrolysis of DNA containing ring-opened 7-methylguanine residues, releasing 2,6-diamino-4-hydroxy-5-(N-methyl)formamidopyrimidine.. The enzyme catalyses 2'-deoxyribonucleotide-(2'-deoxyribose 5'-phosphate)-2'-deoxyribonucleotide-DNA = a 3'-end 2'-deoxyribonucleotide-(2,3-dehydro-2,3-deoxyribose 5'-phosphate)-DNA + a 5'-end 5'-phospho-2'-deoxyribonucleoside-DNA + H(+). In terms of biological role, involved in base excision repair of DNA damaged by oxidation or by mutagenic agents. Acts as a DNA glycosylase that recognizes and removes damaged bases. Has a preference for oxidized purines, such as 7,8-dihydro-8-oxoguanine (8-oxoG). Has AP (apurinic/apyrimidinic) lyase activity and introduces nicks in the DNA strand. Cleaves the DNA backbone by beta-delta elimination to generate a single-strand break at the site of the removed base with both 3'- and 5'-phosphates. The sequence is that of Formamidopyrimidine-DNA glycosylase from Paraburkholderia xenovorans (strain LB400).